A 919-amino-acid chain; its full sequence is Plasma membrane ATPase 1 (919 aa).

Residues Met-1 to Pro-16 are compositionally biased toward basic and acidic residues. The tract at residues Met-1–Val-73 is disordered. The Cytoplasmic portion of the chain corresponds to Met-1–Lys-113. Residues Gln-34–Asp-63 show a composition bias toward acidic residues. Phosphoserine is present on Ser-89. A helical transmembrane segment spans residues Phe-114 to Ala-134. Topologically, residues Gly-135 to Asp-138 are extracellular. The chain crosses the membrane as a helical span at residues Trp-139–Val-158. The Cytoplasmic portion of the chain corresponds to Gln-159–Asn-289. The chain crosses the membrane as a helical span at residues Gly-290–Phe-311. The Extracellular portion of the chain corresponds to Tyr-312–Glu-322. The helical transmembrane segment at Tyr-323–Ala-345 threads the bilayer. The Cytoplasmic segment spans residues Val-346–Leu-717. Asp-376 serves as the catalytic 4-aspartylphosphate intermediate. Phosphoserine is present on Ser-494. Positions 632 and 636 each coordinate Mg(2+). The chain crosses the membrane as a helical span at residues Glu-718–Tyr-736. The Extracellular portion of the chain corresponds to Asp-737–Arg-752. Residues Leu-753–Asn-772 form a helical membrane-spanning segment. Topologically, residues Thr-773 to Gln-824 are cytoplasmic. Residues Leu-825–Phe-845 form a helical membrane-spanning segment. The Extracellular segment spans residues Lys-846–Arg-858. A helical membrane pass occupies residues Ile-859 to Tyr-875. The Cytoplasmic segment spans residues Ile-876–Ala-919. Phosphoserine is present on Ser-899.

This sequence belongs to the cation transport ATPase (P-type) (TC 3.A.3) family. Type IIIA subfamily.

Its subcellular location is the cell membrane. It catalyses the reaction ATP + H2O + H(+)(in) = ADP + phosphate + 2 H(+)(out). In terms of biological role, the plasma membrane ATPase of plants and fungi is a hydrogen ion pump. The proton gradient it generates drives the active transport of nutrients by H(+)-symport. The resulting external acidification and/or internal alkinization may mediate growth responses. In Schizosaccharomyces pombe (strain 972 / ATCC 24843) (Fission yeast), this protein is Plasma membrane ATPase 1 (pma1).